A 366-amino-acid chain; its full sequence is 3-dehydroquinate synthase (366 aa).

Residues 69–74, 103–107, 127–128, Lys-140, and Lys-149 each bind NAD(+); these read DGEAFK, GVIGD, and TT. Zn(2+) contacts are provided by Glu-182, His-245, and His-262.

It belongs to the sugar phosphate cyclases superfamily. Dehydroquinate synthase family. The cofactor is Co(2+). Zn(2+) serves as cofactor. Requires NAD(+) as cofactor.

Its subcellular location is the cytoplasm. The catalysed reaction is 7-phospho-2-dehydro-3-deoxy-D-arabino-heptonate = 3-dehydroquinate + phosphate. The protein operates within metabolic intermediate biosynthesis; chorismate biosynthesis; chorismate from D-erythrose 4-phosphate and phosphoenolpyruvate: step 2/7. Functionally, catalyzes the conversion of 3-deoxy-D-arabino-heptulosonate 7-phosphate (DAHP) to dehydroquinate (DHQ). This chain is 3-dehydroquinate synthase, found in Pseudomonas fluorescens (strain Pf0-1).